We begin with the raw amino-acid sequence, 148 residues long: Calmodulin-related protein 97A (148 aa).

4 EF-hand domains span residues 7–42 (EQIA…LGQN), 43–78 (PTEA…QMRE), 80–115 (DTEE…LGEK), and 116–148 (VTDE…ISQK). Positions 20, 24, 26, 31, 58, 60, 62, 67, 93, 95, 97, 104, 129, 131, 133, 135, and 140 each coordinate Ca(2+).

Belongs to the calmodulin family.

Its function is as follows. May be involved in calcium-mediated signal transduction. In Drosophila melanogaster (Fruit fly), this protein is Calmodulin-related protein 97A (Acam).